Consider the following 410-residue polypeptide: Ribonucleoside-diphosphate reductase small chain (410 aa).

Polar residues predominate over residues M1–M20. Disordered stretches follow at residues M1–L43 and N55–P78. 2 stretches are compositionally biased toward basic and acidic residues: residues P23–L43 and N55–K65. Positions 146, 177, and 180 each coordinate Fe cation. Y184 is an active-site residue. 3 residues coordinate Fe cation: E240, E274, and H277.

It belongs to the ribonucleoside diphosphate reductase small chain family. As to quaternary structure, heterodimer of a large and a small subunit. Requires Fe cation as cofactor.

The enzyme catalyses a 2'-deoxyribonucleoside 5'-diphosphate + [thioredoxin]-disulfide + H2O = a ribonucleoside 5'-diphosphate + [thioredoxin]-dithiol. In terms of biological role, provides the precursors necessary for DNA synthesis. Catalyzes the biosynthesis of deoxyribonucleotides from the corresponding ribonucleotides. The chain is Ribonucleoside-diphosphate reductase small chain (rnr-2) from Neurospora crassa (strain ATCC 24698 / 74-OR23-1A / CBS 708.71 / DSM 1257 / FGSC 987).